We begin with the raw amino-acid sequence, 178 residues long: Large ribosomal subunit protein uL5 (178 aa).

This sequence belongs to the universal ribosomal protein uL5 family. Part of the 50S ribosomal subunit; part of the 5S rRNA/L5/L18/L25 subcomplex. Contacts the 5S rRNA and the P site tRNA. Forms a bridge to the 30S subunit in the 70S ribosome.

In terms of biological role, this is one of the proteins that bind and probably mediate the attachment of the 5S RNA into the large ribosomal subunit, where it forms part of the central protuberance. In the 70S ribosome it contacts protein S13 of the 30S subunit (bridge B1b), connecting the 2 subunits; this bridge is implicated in subunit movement. Contacts the P site tRNA; the 5S rRNA and some of its associated proteins might help stabilize positioning of ribosome-bound tRNAs. This chain is Large ribosomal subunit protein uL5, found in Prochlorococcus marinus (strain MIT 9515).